We begin with the raw amino-acid sequence, 910 residues long: Adhesion G-protein coupled receptor F1 (910 aa).

The signal sequence occupies residues 1 to 19 (MKVGVLWLISFFTFTDGHG). Over 20 to 583 (GFLGKNDGIK…SPFVPSTIFP (564 aa)) the chain is Extracellular. N-linked (GlcNAc...) asparagine glycosylation is found at asparagine 139, asparagine 168, asparagine 205, asparagine 282, asparagine 310, asparagine 317, asparagine 329, asparagine 354, asparagine 368, asparagine 389, asparagine 410, asparagine 423, asparagine 437, asparagine 455, asparagine 512, asparagine 528, and asparagine 553. Residues 148–256 (ERTKIWGTFK…GSFRVFGKAQ (109 aa)) form the SEA domain. Intrachain disulfides connect cysteine 257-cysteine 287 and cysteine 275-cysteine 299. Residues 437-579 (NKSQLKRGYS…SILMSPFVPS (143 aa)) enclose the GAIN-B domain. Disulfide bonds link cysteine 534-cysteine 561 and cysteine 549-cysteine 563. The GPS stretch occupies residues 534–579 (CVFWDFSHLQWNDAGCHLVNETQDIVTCQCTHLTSFSILMSPFVPS). Positions 568 to 576 (SFSILMSPF) are stachel. Residues 584–609 (VVKWITYVGLGISIGSLILCLIIEAL) traverse the membrane as a helical segment. The Cytoplasmic portion of the chain corresponds to 610 to 621 (FWKQIKKSQTSH). A helical transmembrane segment spans residues 622–646 (TRRICMVNIALSLLIADVWFIVGAT). At 647–658 (VDTTVNPSGVCT) the chain is on the extracellular side. Cysteine 657 and cysteine 733 are joined by a disulfide. The chain crosses the membrane as a helical span at residues 659-684 (AAVFFTHFFYLSLFFWMLMLGILLAY). The Cytoplasmic portion of the chain corresponds to 685 to 696 (RIILVFHHMAQH). The helical transmembrane segment at 697-719 (LMMAVGFCLGYGCPLIISVITIA) threads the bilayer. Residues 720 to 742 (VTQPSNTYKRKDVCWLNWSNGSK) lie on the Extracellular side of the membrane. N-linked (GlcNAc...) asparagine glycosylation is found at asparagine 736 and asparagine 739. The chain crosses the membrane as a helical span at residues 743–767 (PLLAFVVPALAIVAVNFVVVLLVLT). Over 768–784 (KLWRPTVGERLSRDDKA) the chain is Cytoplasmic. A helical membrane pass occupies residues 785 to 813 (TIIRVGKSLLILTPLLGLTWGFGIGTIVD). At 814–816 (SQN) the chain is on the extracellular side. A helical membrane pass occupies residues 817–842 (LAWHVIFALLNAFQGFFILCFGILLD). At 843-910 (SKLRQLLFNK…IMLTQFVSNE (68 aa)) the chain is on the cytoplasmic side.

This sequence belongs to the G-protein coupled receptor 2 family. Adhesion G-protein coupled receptor (ADGR) subfamily. Heterodimer of 2 chains generated by proteolytic processing; the large extracellular N-terminal fragment and the membrane-bound C-terminal fragment predominantly remain associated and non-covalently linked. Post-translationally, autoproteolytically processed at the GPS region of the GAIN-B domain; this cleavage modulates receptor activity. Glycosylated. Glycosylation at Asn-389 is required for secretion or folding. In terms of tissue distribution, mainly expressed in the kidney. Up-regulated in lung adenocarcinomas and prostate cancers.

Its subcellular location is the cell membrane. It localises to the secreted. With respect to regulation, forms a heterodimer of 2 chains generated by proteolytic processing that remain associated through non-covalent interactions mediated by the GAIN-B domain. In the inactivated receptor, the Stachel sequence (also named stalk) is embedded in the GAIN-B domain, where it adopts a beta-strand conformation. On activation, the Stachel moves into the 7 transmembrane region and adopts a twisted hook-shaped configuration that forms contacts within the receptor, leading to coupling of a G-alpha protein, which activates signaling. The cleaved GAIN-B and N-terminal domains can then dissociate from the rest of the receptor. Adhesion G-protein coupled receptor (aGPCR) for N-docosahexaenoylethanolamine (synaptamide), an omega-3 fatty acid lipid highly enriched in the brain. Ligand binding causes a conformation change that triggers signaling via guanine nucleotide-binding proteins (G proteins) and modulates the activity of downstream effectors, such as adenylate cyclase. ADGRF1 is coupled to G(s) G proteins and mediates activation of adenylate cyclase activity. Also able to couple to G(q), G(i) and G(12)/G(13) G proteins; additional evidence is however required to confirm this result in vivo. Involved in the development of neurons and cognitive function. In liver, involved in fat accumulation. This is Adhesion G-protein coupled receptor F1 from Homo sapiens (Human).